The primary structure comprises 789 residues: Trimethylamine-oxide aldolase (789 aa).

The protein in the C-terminal section; belongs to the GcvT family.

The catalysed reaction is trimethylamine N-oxide + H(+) = dimethylamine + formaldehyde. Functionally, catalyzes the conversion of trimethylamine N-oxide (TMAO) to dimethylamine (DMA) and formaldehyde. The chain is Trimethylamine-oxide aldolase from Ruegeria pomeroyi (strain ATCC 700808 / DSM 15171 / DSS-3) (Silicibacter pomeroyi).